The primary structure comprises 69 residues: Toxin CSTX-11 (69 aa).

Intrachain disulfides connect C6–C21, C13–C30, C20–C47, and C32–C45.

As to expression, expressed by the venom gland.

The protein resides in the secreted. It is found in the target cell membrane. Functionally, spider venom toxin that shows calcium channel blocking activity and exhibits cytolytic activity by affecting the outer leaflet curvature and/or pore formation across the membrane. It blocks L-type calcium channels (Cav1/CACNA1) in mammalian neurons at nanomolar concentrations. Furthermore, it produces a slow voltage-independent block of mid/low and high voltage-activated calcium channels in cockroach neurons. Potassium ions, histamine, M-ctenitoxin-Cs1a (AC P83619), CSTX-9 (AC P58604), and CSTX-13 (AC P83919) synergistically increase the insecticidal activity of this toxin. In vivo, it causes paralysis in blow flies and provokes death in drosophila. This Cupiennius salei (American wandering spider) protein is Toxin CSTX-11.